A 181-amino-acid polypeptide reads, in one-letter code: Insulin-like growth factor 2 (181 aa).

An N-terminal signal peptide occupies residues 1–24 (MGIPMRKPLLVLLVFLALASCCYA). The interval 25–52 (AYRPSETLCGGELVDTLQFVCGDRGFYF) is b. 3 cysteine pairs are disulfide-bonded: C33–C71, C45–C84, and C70–C75. The c stretch occupies residues 53–64 (SRPASRVNRRSR). Residues 65–85 (GIVEECCFRSCDLALLETYCA) form an a region. Positions 86–91 (TPAKSE) are d. The propeptide at 92–181 (RDVSTPPTVL…ASPEASGHRK (90 aa)) is e peptide. Positions 151-181 (EAKRHRPLTARPTRDPAAHGGASPEASGHRK) are disordered. T163 carries an O-linked (GalNAc...) threonine glycan.

This sequence belongs to the insulin family. As to quaternary structure, interacts with MYORG; this interaction is required for IGF2 secretion. Interacts with integrins ITGAV:ITGB3 and ITGA6:ITGB4; integrin-binding is required for IGF2 signaling. Interacts with IGFBP2. Proteolytically processed by PCSK4, proIGF2 is cleaved at Arg-128 and Arg-92 to generate big-IGF2 and mature IGF2.

The protein resides in the secreted. Functionally, the insulin-like growth factors possess growth-promoting activity. Major fetal growth hormone in mammals. Plays a key role in regulating fetoplacental development. IGF2 is influenced by placental lactogen. Also involved in tissue differentiation. In adults, involved in glucose metabolism in adipose tissue, skeletal muscle and liver. Acts as a ligand for integrin which is required for IGF2 signaling. Positively regulates myogenic transcription factor MYOD1 function by facilitating the recruitment of transcriptional coactivators, thereby controlling muscle terminal differentiation. Inhibits myoblast differentiation and modulates metabolism via increasing the mitochondrial respiration rate. Its function is as follows. Preptin undergoes glucose-mediated co-secretion with insulin, and acts as a physiological amplifier of glucose-mediated insulin secretion. Exhibits osteogenic properties by increasing osteoblast mitogenic activity through phosphoactivation of MAPK1 and MAPK3. The sequence is that of Insulin-like growth factor 2 from Sus scrofa (Pig).